The primary structure comprises 1062 residues: Platelet-derived growth factor receptor alpha (1062 aa).

An N-terminal signal peptide occupies residues Met1–Leu27. Ig-like C2-type domains lie at Thr28–Pro96, Ile91–Trp184, Leu190–Ala281, Ser287–Ser381, and Pro389–Val493. Residues Thr28 to Ala504 lie on the Extracellular side of the membrane. Cys29 and Cys74 are disulfide-bonded. Residues Asn79 and Asn132 are each glycosylated (N-linked (GlcNAc...) asparagine). Disulfide bonds link Cys124-Cys165 and Cys211-Cys265. Asn273, Asn333, Asn366, Asn433, and Asn444 each carry an N-linked (GlcNAc...) asparagine glycan. Cys410 and Cys477 are disulfide-bonded. The chain crosses the membrane as a helical span at residues Ala505 to Trp525. Over Lys526–Leu1062 the chain is Cytoplasmic. Tyr548 and Tyr550 each carry phosphotyrosine; by autocatalysis. Positions Leu569–Leu945 constitute a Protein kinase domain. ATP contacts are provided by residues Leu575–Val583 and Lys603. Phosphotyrosine; by autocatalysis is present on residues Tyr697, Tyr708, Tyr719, Tyr731, and Tyr739. Positions Leu734–Asp754 are disordered. The Proton acceptor role is filled by Asp793. Residues Tyr824 and Tyr963 each carry the phosphotyrosine; by autocatalysis modification. Residues Lys975–Leu986 are compositionally biased toward basic and acidic residues. Residues Lys975–Lys1034 form a disordered region. Tyr992 carries the post-translational modification Phosphotyrosine; by autocatalysis. Positions Ser1014–Phe1032 are enriched in polar residues.

It belongs to the protein kinase superfamily. Tyr protein kinase family. CSF-1/PDGF receptor subfamily. In terms of assembly, interacts with homodimeric pdgfa, pdgfb and pdgfc, and with heterodimers formed by pdgfa and pdgfb. monomer in the absence of bound ligand. Interaction with dimeric pdgfa, pdgfb and/or pdgfc leads to receptor dimerization, where both pdgfra homodimers and heterodimers with pdgfrb are observed. Post-translationally, ubiquitinated, leading to its degradation. In terms of processing, autophosphorylated on tyrosine residues upon ligand binding. Autophosphorylation occurs in trans, i.e. one subunit of the dimeric receptor phosphorylates tyrosine residues on the other subunit.

The protein localises to the cell membrane. The catalysed reaction is L-tyrosyl-[protein] + ATP = O-phospho-L-tyrosyl-[protein] + ADP + H(+). With respect to regulation, present in an inactive conformation in the absence of bound ligand. Binding of pdgfa and/or pdgfb leads to dimerization and activation by autophosphorylation on tyrosine residues. In terms of biological role, tyrosine-protein kinase that acts as a cell-surface receptor for pdgfa, pdgfb and pdgfc and plays an essential role in the regulation of embryonic development, cell proliferation, survival and chemotaxis. Depending on the context, promotes or inhibits cell proliferation and cell migration. Plays an important role in the differentiation of bone marrow-derived mesenchymal stem cells. Required for normal skeleton development. Required for normal development of the gastrointestinal tract. Plays a role in cell migration and chemotaxis in wound healing. Plays a role in platelet activation, secretion of agonists from platelet granules, and in thrombin-induced platelet aggregation. Binding of its cognate ligands - homodimeric pdgfa, homodimeric pdgfb, heterodimers formed by pdgfa and pdgfb or homodimeric pdgfc -leads to the activation of several signaling cascades; the response depends on the nature of the bound ligand and is modulated by the formation of heterodimers between pdgfra and pdgfrb. Phosphorylates pik3r1, plcg1, and ptpn11. Activation of plcg1 leads to the production of the cellular signaling molecules diacylglycerol and inositol 1,4,5-trisphosphate, mobilization of cytosolic Ca(2+) and the activation of protein kinase C. Phosphorylates pik3r1, the regulatory subunit of phosphatidylinositol 3-kinase, and thereby mediates activation of the AKT1 signaling pathway. Mediates activation of hras and of the MAP kinases mapk1/erk2 and/or mapk3/erk1. Promotes activation of STAT family members stat1, stat3 and stat5a and/or stat5b. Receptor signaling is down-regulated by protein phosphatases that dephosphorylate the receptor and its down-stream effectors, and by rapid internalization of the activated receptor. The protein is Platelet-derived growth factor receptor alpha (pdgfra) of Takifugu rubripes (Japanese pufferfish).